A 186-amino-acid polypeptide reads, in one-letter code: Photosystem I assembly protein Ycf4 (186 aa).

The next 2 membrane-spanning stretches (helical) occupy residues 22–42 (FCWA…GTSS) and 57–77 (IIFF…LFIS).

The protein belongs to the Ycf4 family.

It is found in the plastid. The protein resides in the chloroplast thylakoid membrane. Its function is as follows. Seems to be required for the assembly of the photosystem I complex. The protein is Photosystem I assembly protein Ycf4 of Vitis vinifera (Grape).